We begin with the raw amino-acid sequence, 454 residues long: Cytochrome b-c1 complex subunit 2, mitochondrial (454 aa).

Residues 1 to 35 constitute a mitochondrion transit peptide; the sequence is MISRSALSRGSQLALRRPAAAKTAQRGFAAAAASP.

Belongs to the peptidase M16 family. UQCRC2/QCR2 subfamily. Component of the ubiquinol-cytochrome c oxidoreductase (cytochrome b-c1 complex, complex III, CIII), a multisubunit enzyme composed of 10 subunits. The complex is composed of 3 respiratory subunits cytochrome b (cob), cytochrome c1 (cyt-1) and Rieske protein (fes-1), 2 core protein subunits pep and ucr-1, and 5 low-molecular weight protein subunits qcr6, qcr7, qcr8, qcr9 and probably NCU16844/qcr10. The complex exists as an obligatory dimer and forms supercomplexes (SCs) in the inner mitochondrial membrane with NADH-ubiquinone oxidoreductase (complex I, CI) and cytochrome c oxidase (complex IV, CIV), resulting in different assemblies (supercomplexes SCI(1)III(2), SCIII(2)IV(1) and SCIII(2)IV(2) as well as higher order I(x)III(y)IV(z) megacomplexes).

Its subcellular location is the mitochondrion inner membrane. Its function is as follows. Component of the ubiquinol-cytochrome c oxidoreductase, a multisubunit transmembrane complex that is part of the mitochondrial electron transport chain which drives oxidative phosphorylation. The respiratory chain contains 3 multisubunit complexes succinate dehydrogenase (complex II, CII), ubiquinol-cytochrome c oxidoreductase (cytochrome b-c1 complex, complex III, CIII) and cytochrome c oxidase (complex IV, CIV), that cooperate to transfer electrons derived from NADH and succinate to molecular oxygen, creating an electrochemical gradient over the inner membrane that drives transmembrane transport and the ATP synthase. The cytochrome b-c1 complex catalyzes electron transfer from ubiquinol to cytochrome c, linking this redox reaction to translocation of protons across the mitochondrial inner membrane, with protons being carried across the membrane as hydrogens on the quinol. In the process called Q cycle, 2 protons are consumed from the matrix, 4 protons are released into the intermembrane space and 2 electrons are passed to cytochrome c. In Neurospora crassa (strain ATCC 24698 / 74-OR23-1A / CBS 708.71 / DSM 1257 / FGSC 987), this protein is Cytochrome b-c1 complex subunit 2, mitochondrial (ucr-1).